We begin with the raw amino-acid sequence, 210 residues long: tRNA (guanine-N(7)-)-methyltransferase (210 aa).

S-adenosyl-L-methionine contacts are provided by E36, E61, D90, and D112. Residue D112 is part of the active site. Substrate contacts are provided by residues K116, D148, and 188–191; that span reads TEYE.

The protein belongs to the class I-like SAM-binding methyltransferase superfamily. TrmB family.

The enzyme catalyses guanosine(46) in tRNA + S-adenosyl-L-methionine = N(7)-methylguanosine(46) in tRNA + S-adenosyl-L-homocysteine. It functions in the pathway tRNA modification; N(7)-methylguanine-tRNA biosynthesis. Its function is as follows. Catalyzes the formation of N(7)-methylguanine at position 46 (m7G46) in tRNA. This chain is tRNA (guanine-N(7)-)-methyltransferase, found in Mycoplasma genitalium (strain ATCC 33530 / DSM 19775 / NCTC 10195 / G37) (Mycoplasmoides genitalium).